Here is a 258-residue protein sequence, read N- to C-terminus: uncharacterized protein (258 aa).

3 Solcar repeats span residues 9–78 (KPIL…AKAR), 81–160 (PGVR…FKKK), and 165–246 (DHVF…VKSH). 6 consecutive transmembrane segments (helical) span residues 11-31 (ILVG…LSTI), 53-73 (GLSS…FVYE), 87-107 (LVSA…AEVV), 139-159 (MCGR…QFKK), 171-191 (PKGA…LDVI), and 218-239 (FEKG…YLGT).

The protein belongs to the mitochondrial carrier (TC 2.A.29) family.

It localises to the mitochondrion inner membrane. This is an uncharacterized protein from Schizosaccharomyces pombe (strain 972 / ATCC 24843) (Fission yeast).